We begin with the raw amino-acid sequence, 342 residues long: Ion-translocating oxidoreductase complex subunit D (342 aa).

3 consecutive transmembrane segments (helical) span residues 42–62 (GSVI…ALFL), 68–90 (NIAF…LALP), and 124–144 (AMVG…QWLA). At threonine 171 the chain carries FMN phosphoryl threonine. 5 helical membrane passes run 200–220 (FAGL…LYLI), 227–247 (WHIP…AWLI), 252–272 (FADP…FFIA), 286–306 (LVYA…GGYP), and 308–328 (AVAF…YYTQ).

Belongs to the NqrB/RnfD family. In terms of assembly, the complex is composed of six subunits: RnfA, RnfB, RnfC, RnfD, RnfE and RnfG. The cofactor is FMN.

The protein localises to the cell inner membrane. In terms of biological role, part of a membrane-bound complex that couples electron transfer with translocation of ions across the membrane. The polypeptide is Ion-translocating oxidoreductase complex subunit D (Alcanivorax borkumensis (strain ATCC 700651 / DSM 11573 / NCIMB 13689 / SK2)).